Consider the following 231-residue polypeptide: Lactate utilization protein C (231 aa).

Belongs to the LutC/YkgG family.

Its function is as follows. Is involved in L-lactate degradation and allows cells to grow with lactate as the sole carbon source. This chain is Lactate utilization protein C, found in Macrococcus caseolyticus (strain JCSC5402) (Macrococcoides caseolyticum).